A 344-amino-acid polypeptide reads, in one-letter code: Dihydroorotase (344 aa).

His13 and His15 together coordinate Zn(2+). Residues 15-17 (HLR) and Asn41 each bind substrate. Zn(2+)-binding residues include Lys98, His135, and His173. The residue at position 98 (Lys98) is an N6-carboxylysine. His135 is a binding site for substrate. Substrate is bound at residue Leu218. Asp247 is a Zn(2+) binding site. Residue Asp247 is part of the active site. Residues His251 and Ala263 each contribute to the substrate site.

It belongs to the metallo-dependent hydrolases superfamily. DHOase family. Class II DHOase subfamily. In terms of assembly, homodimer. Zn(2+) is required as a cofactor.

It catalyses the reaction (S)-dihydroorotate + H2O = N-carbamoyl-L-aspartate + H(+). Its pathway is pyrimidine metabolism; UMP biosynthesis via de novo pathway; (S)-dihydroorotate from bicarbonate: step 3/3. In terms of biological role, catalyzes the reversible cyclization of carbamoyl aspartate to dihydroorotate. This Neisseria meningitidis serogroup B (strain ATCC BAA-335 / MC58) protein is Dihydroorotase.